Reading from the N-terminus, the 126-residue chain is MSALDTSIRVEVKTEYIEQQSSPEDEKYLFSYTITIINLGEQAAKLETRHWIITDANGNTSEVQGAGVVGETPTIAPNTAYQYTSGTVLDTPLGIMHGTYGMVSESGEHFQATIRPFRLATPGLLH.

One can recognise an ApaG domain in the interval 2–126; the sequence is SALDTSIRVE…FRLATPGLLH (125 aa).

This Shewanella baltica (strain OS223) protein is Protein ApaG.